Here is a 27-residue protein sequence, read N- to C-terminus: Equinin A (27 aa).

Over residues 1 to 13 (AVDKGGGKAEKKD) the composition is skewed to basic and acidic residues. The interval 1 to 27 (AVDKGGGKAEKKDGNRKKKLAGGEGGG) is disordered.

The protein localises to the secreted. In terms of biological role, peptide with unknown function. Does not show antimicrobial and hemolytic activities. This chain is Equinin A, found in Actinia equina (Beadlet anemone).